Here is a 655-residue protein sequence, read N- to C-terminus: Putative calcium up-regulated protein J (655 aa).

The Ricin B-type lectin domain occupies 40–181 (KSRAMLKGDN…DNVCFQWDLE (142 aa)).

It belongs to the cup family.

In Dictyostelium discoideum (Social amoeba), this protein is Putative calcium up-regulated protein J (cupJ).